The following is a 314-amino-acid chain: MSHSANFYRLETRLQSLTGKAIGDFGMIEDGDTVLVCMSGGKDSYTMLSVLTALQKRAPIQFKLIAMNLDQKQPGFPEHVLPAYLKSLGVEYVIVEADTYSIVKEKVPEGKTTCSLCSRLRRGVIYRTAKELGANKIALGHHRDDIVNTFFLNMFFGGKMKAMPPKLATDDGQHIVIRPLAYCAEKDIASYARAMAFPIIPCNLCGSQENLQRKKVSEMLQAWERENPGRIDNIFAALRNVVPSHLADTDLFPFTGLATGLAKIDEASLFGETTFTQQALTFTGNVEANRMEFVRFDKIQKVQEAPERASEPSA.

A PP-loop motif motif is present at residues 39–44; the sequence is SGGKDS. Residues Cys-114, Cys-117, and Cys-205 each coordinate [4Fe-4S] cluster.

It belongs to the TtcA family. Homodimer. The cofactor is Mg(2+). [4Fe-4S] cluster is required as a cofactor.

The protein localises to the cytoplasm. It carries out the reaction cytidine(32) in tRNA + S-sulfanyl-L-cysteinyl-[cysteine desulfurase] + AH2 + ATP = 2-thiocytidine(32) in tRNA + L-cysteinyl-[cysteine desulfurase] + A + AMP + diphosphate + H(+). Its pathway is tRNA modification. In terms of biological role, catalyzes the ATP-dependent 2-thiolation of cytidine in position 32 of tRNA, to form 2-thiocytidine (s(2)C32). The sulfur atoms are provided by the cysteine/cysteine desulfurase (IscS) system. The chain is tRNA-cytidine(32) 2-sulfurtransferase from Cupriavidus metallidurans (strain ATCC 43123 / DSM 2839 / NBRC 102507 / CH34) (Ralstonia metallidurans).